The chain runs to 362 residues: 3-dehydroquinate synthase (362 aa).

Belongs to the archaeal-type DHQ synthase family.

It carries out the reaction 2-amino-2,3,7-trideoxy-D-lyxo-hept-6-ulosonate + NAD(+) + H2O = 3-dehydroquinate + NH4(+) + NADH + H(+). In terms of biological role, catalyzes the oxidative deamination and cyclization of 2-amino-3,7-dideoxy-D-threo-hept-6-ulosonic acid (ADH) to yield 3-dehydroquinate (DHQ), which is fed into the canonical shikimic pathway of aromatic amino acid biosynthesis. This is 3-dehydroquinate synthase from Methanococcus aeolicus (strain ATCC BAA-1280 / DSM 17508 / OCM 812 / Nankai-3).